The following is a 410-amino-acid chain: Cathepsin D (410 aa).

An N-terminal signal peptide occupies residues 1–18 (MQPPSLLLLVLGLLAAPA). A propeptide spans 19–64 (AALVRIPLHKFTSVRRTMTELGGPVEDLIAKGPISKYAQGAPAVTG) (activation peptide). The 327-residue stretch at 79–405 (YYGEIGIGTP…DRDQNRVGLA (327 aa)) folds into the Peptidase A1 domain. 2 cysteine pairs are disulfide-bonded: Cys-91-Cys-160 and Cys-110-Cys-117. The active site involves Asp-97. N-linked (GlcNAc...) asparagine glycosylation is found at Asn-134 and Asn-261. Residues Cys-284 and Cys-288 are joined by a disulfide bond. Asp-293 is an active-site residue. Cys-327 and Cys-364 are disulfide-bonded.

It belongs to the peptidase A1 family. As to quaternary structure, consists of a light chain and a heavy chain. Interacts with ADAM30; this leads to activation of CTSD. Interacts with GRN; stabilizes CTSD; increases its proteolytic activity. In terms of processing, N- and O-glycosylated. Post-translationally, undergoes proteolytic cleavage and activation by ADAM30.

The protein localises to the lysosome. It is found in the melanosome. It localises to the secreted. Its subcellular location is the extracellular space. It carries out the reaction Specificity similar to, but narrower than, that of pepsin A. Does not cleave the 4-Gln-|-His-5 bond in B chain of insulin.. Acid protease active in intracellular protein breakdown. Plays a role in APP processing following cleavage and activation by ADAM30 which leads to APP degradation. This chain is Cathepsin D (CTSD), found in Canis lupus familiaris (Dog).